A 400-amino-acid chain; its full sequence is MSDILQELLRVSEKAANIARACRQQETLFQLLIEEKKEGEKNKKFAVDFKTLADVLVQEVIKENMENKFPGLGKKIFGEESNEFTNDLGEKIIMRLGPTEEETVALLSKVLNGNKLASEALAKVVHQDVFFSDPALDSVEINIPQDILGIWVDPIDSTYQYIKGSADITPNQGIFPSGLQCVTVLIGVYDIQTGVPLMGVINQPFVSQDLHTRRWKGQCYWGLSYLGTNIHSLLPPVSTRSNSEAQSQGTQNPSSEGSCRFSVVISTSEKETIKGALSHVCGERIFRAAGAGYKSLCVILGLADIYIFSEDTTFKWDSCAAHAILRAMGGGMVDLKECLERNPDTGLDLPQLVYHVGNEGAAGVDQWANKGGLIAYRSEKQLETFLSRLLQHLAPVATHT.

Position 54 (Asp-54) interacts with Li(+). Glu-79 is a binding site for Mg(2+). Position 80 (Glu-80) interacts with Li(+). Residues Asp-153 and Ile-155 each contribute to the Mg(2+) site. 1D-myo-inositol 1,4-bisphosphate is bound by residues Asp-156, Ser-157, and Thr-158. Over residues 238–257 the composition is skewed to polar residues; that stretch reads STRSNSEAQSQGTQNPSSEG. Residues 238–258 are disordered; the sequence is STRSNSEAQSQGTQNPSSEGS. Residues Ser-268, Lys-270, Gly-290, Ala-291, Lys-294, and Thr-312 each contribute to the 1D-myo-inositol 1,4-bisphosphate site. Asp-317 contributes to the Mg(2+) binding site. Ser-318 carries the post-translational modification Phosphoserine.

This sequence belongs to the inositol monophosphatase superfamily. As to quaternary structure, monomer. The cofactor is Mg(2+).

It catalyses the reaction 1D-myo-inositol 1,4-bisphosphate + H2O = 1D-myo-inositol 4-phosphate + phosphate. It carries out the reaction 1D-myo-inositol 1,3,4-trisphosphate + H2O = 1D-myo-inositol 3,4-bisphosphate + phosphate. The protein operates within signal transduction; phosphatidylinositol signaling pathway. Inhibited by Li(+). Its function is as follows. Mg(2+)-dependent phosphatase that catalyzes the hydrolysis of the 1-position phosphate from inositol 1,4-bisphosphate and inositol 1,3,4-trisphosphate and participates in inositol phosphate metabolism. This is Inositol polyphosphate 1-phosphatase from Bos taurus (Bovine).